A 293-amino-acid chain; its full sequence is Pyridoxal 5'-phosphate synthase subunit PdxS (293 aa).

Aspartate 23 is a D-ribose 5-phosphate binding site. Catalysis depends on lysine 80, which acts as the Schiff-base intermediate with D-ribose 5-phosphate. A D-ribose 5-phosphate-binding site is contributed by glycine 152. Arginine 164 is a binding site for D-glyceraldehyde 3-phosphate. Residues glycine 213 and 234 to 235 contribute to the D-ribose 5-phosphate site; that span reads GS.

It belongs to the PdxS/SNZ family. In the presence of PdxT, forms a dodecamer of heterodimers.

It carries out the reaction aldehydo-D-ribose 5-phosphate + D-glyceraldehyde 3-phosphate + L-glutamine = pyridoxal 5'-phosphate + L-glutamate + phosphate + 3 H2O + H(+). It functions in the pathway cofactor biosynthesis; pyridoxal 5'-phosphate biosynthesis. Catalyzes the formation of pyridoxal 5'-phosphate from ribose 5-phosphate (RBP), glyceraldehyde 3-phosphate (G3P) and ammonia. The ammonia is provided by the PdxT subunit. Can also use ribulose 5-phosphate and dihydroxyacetone phosphate as substrates, resulting from enzyme-catalyzed isomerization of RBP and G3P, respectively. The polypeptide is Pyridoxal 5'-phosphate synthase subunit PdxS (Desulfovibrio desulfuricans (strain ATCC 27774 / DSM 6949 / MB)).